Here is a 375-residue protein sequence, read N- to C-terminus: Growth/differentiation factor 8 (375 aa).

Positions 1–18 (MQKLQIFVYIYLFMLLVA) are cleaved as a signal peptide. Residues 19 to 266 (GPVDLNENSE…VTDTPKRSRR (248 aa)) constitute a propeptide that is removed on maturation. N-linked (GlcNAc...) asparagine glycosylation is found at Asn-48 and Asn-71. 4 disulfide bridges follow: Cys-272–Cys-282, Cys-281–Cys-340, Cys-309–Cys-372, and Cys-313–Cys-374.

This sequence belongs to the TGF-beta family. As to quaternary structure, homodimer; disulfide-linked. Interacts with WFIKKN2, leading to inhibit its activity. Interacts with FSTL3. Post-translationally, synthesized as large precursor molecule that undergoes proteolytic cleavage to generate an N-terminal propeptide and a disulfide linked C-terminal dimer, which is the biologically active molecule. The circulating form consists of a latent complex of the C-terminal dimer and other proteins, including its propeptide, which maintain the C-terminal dimer in a latent, inactive state. Ligand activation requires additional cleavage of the prodomain by a tolloid-like metalloproteinase.

The protein localises to the secreted. Functionally, acts specifically as a negative regulator of skeletal muscle growth. This is Growth/differentiation factor 8 (MSTN) from Capra ibex (Ibex).